Reading from the N-terminus, the 110-residue chain is NADH-quinone oxidoreductase subunit K (110 aa).

3 helical membrane passes run 13-33, 41-61, and 73-93; these read LNHY…GLFM, ILMS…AFSI, and IIIL…LLIY.

This sequence belongs to the complex I subunit 4L family. NDH-1 is composed of 14 different subunits. Subunits NuoA, H, J, K, L, M, N constitute the membrane sector of the complex.

Its subcellular location is the cell inner membrane. The catalysed reaction is a quinone + NADH + 5 H(+)(in) = a quinol + NAD(+) + 4 H(+)(out). In terms of biological role, NDH-1 shuttles electrons from NADH, via FMN and iron-sulfur (Fe-S) centers, to quinones in the respiratory chain. The immediate electron acceptor for the enzyme in this species is believed to be ubiquinone. Couples the redox reaction to proton translocation (for every two electrons transferred, four hydrogen ions are translocated across the cytoplasmic membrane), and thus conserves the redox energy in a proton gradient. In Rickettsia felis (strain ATCC VR-1525 / URRWXCal2) (Rickettsia azadi), this protein is NADH-quinone oxidoreductase subunit K.